An 89-amino-acid chain; its full sequence is Small ribosomal subunit protein uS15 (89 aa).

It belongs to the universal ribosomal protein uS15 family. As to quaternary structure, part of the 30S ribosomal subunit. Forms a bridge to the 50S subunit in the 70S ribosome, contacting the 23S rRNA.

Its function is as follows. One of the primary rRNA binding proteins, it binds directly to 16S rRNA where it helps nucleate assembly of the platform of the 30S subunit by binding and bridging several RNA helices of the 16S rRNA. Functionally, forms an intersubunit bridge (bridge B4) with the 23S rRNA of the 50S subunit in the ribosome. This Leifsonia xyli subsp. xyli (strain CTCB07) protein is Small ribosomal subunit protein uS15.